We begin with the raw amino-acid sequence, 749 residues long: Polyribonucleotide nucleotidyltransferase (749 aa).

Residues Asp487 and Asp493 each contribute to the Mg(2+) site. The KH domain maps to 554–613; sequence PSTTTIKIDKDKIRDIIGPGGKIIKEICETSGAKIDISDDGTVSVYASDRDKLKVALDKI. Positions 623-691 constitute an S1 motif domain; that stretch reads GEIFNGTVVK…NKGKAKLTIK (69 aa). A disordered region spans residues 691–749; that stretch reads KNADKDKSSNNTKPKTNVNNTNKDNSEPEQRRDSSKKRAWNEDNNAETAEVITERKYFN. Residues 699–713 are compositionally biased toward low complexity; sequence SNNTKPKTNVNNTNK. Basic and acidic residues predominate over residues 714–723; the sequence is DNSEPEQRRD.

Belongs to the polyribonucleotide nucleotidyltransferase family. Requires Mg(2+) as cofactor.

It localises to the cytoplasm. It catalyses the reaction RNA(n+1) + phosphate = RNA(n) + a ribonucleoside 5'-diphosphate. Its function is as follows. Involved in mRNA degradation. Catalyzes the phosphorolysis of single-stranded polyribonucleotides processively in the 3'- to 5'-direction. This is Polyribonucleotide nucleotidyltransferase from Rickettsia conorii (strain ATCC VR-613 / Malish 7).